A 122-amino-acid chain; its full sequence is Ribonuclease P protein component (122 aa).

The protein belongs to the RnpA family. In terms of assembly, consists of a catalytic RNA component (M1 or rnpB) and a protein subunit.

The enzyme catalyses Endonucleolytic cleavage of RNA, removing 5'-extranucleotides from tRNA precursor.. RNaseP catalyzes the removal of the 5'-leader sequence from pre-tRNA to produce the mature 5'-terminus. It can also cleave other RNA substrates such as 4.5S RNA. The protein component plays an auxiliary but essential role in vivo by binding to the 5'-leader sequence and broadening the substrate specificity of the ribozyme. The chain is Ribonuclease P protein component from Oenococcus oeni (strain ATCC BAA-331 / PSU-1).